A 210-amino-acid chain; its full sequence is DNA dC-&gt;dU-editing enzyme APOBEC-3H (210 aa).

Positions 4–126 (LTAKTFSLQF…PNYQEGLLLL (123 aa)) constitute a CMP/dCMP-type deaminase domain. His-54 contacts Zn(2+). Catalysis depends on Glu-56, which acts as the Proton donor. Zn(2+) contacts are provided by Cys-85 and Cys-88. Positions 182-210 (SRSVDVLENGLRSLQLGPVTPSSSIRNSR) are necessary and sufficient for localization to the cytoplasm.

The protein belongs to the cytidine and deoxycytidylate deaminase family. Homodimer. It depends on Zn(2+) as a cofactor.

It localises to the cytoplasm. The enzyme catalyses a 2'-deoxycytidine in single-stranded DNA + H2O + H(+) = a 2'-deoxyuridine in single-stranded DNA + NH4(+). Its activity is regulated as follows. Antiviral activity is neutralized by the simian immunodeficiency virus rhesus (SIV-mac) virion infectivity factor (VIF). DNA deaminase (cytidine deaminase) which acts as an inhibitor of retrovirus replication and retrotransposon mobility via deaminase-dependent and -independent mechanisms. Exhibits antiviral activity against vif-deficient HIV-1. After the penetration of retroviral nucleocapsids into target cells of infection and the initiation of reverse transcription, it can induce the conversion of cytosine to uracil in the minus-sense single-strand viral DNA, leading to G-to-A hypermutations in the subsequent plus-strand viral DNA. The resultant detrimental levels of mutations in the proviral genome, along with a deamination-independent mechanism that works prior to the proviral integration, together exert efficient antiretroviral effects in infected target cells. Selectively targets single-stranded DNA and does not deaminate double-stranded DNA or single- or double-stranded RNA. This Macaca mulatta (Rhesus macaque) protein is DNA dC-&gt;dU-editing enzyme APOBEC-3H.